The sequence spans 193 residues: HMG-Y-related protein A (193 aa).

The H15 domain occupies 11–81 (PIPPYPEMIL…LKNNYFRAGA (71 aa)). Positions 75-193 (NYFRAGAPDA…PAVPSETAAA (119 aa)) are disordered. The short motif at 86-92 (PKRGRGR) is the Nuclear localization signal 1 (NLS) element. 4 consecutive DNA-binding regions (a.T hook) follow at residues 87-98 (KRGRGRPPKARD), 113-124 (GRGRGRPPKAKS), 138-149 (PKPRGRPPKKAK), and 173-184 (KRGRGRPPKVRP). Residues 145–149 (PKKAK) carry the Nuclear localization signal 2 (NLS) motif.

The protein belongs to the histone H1/H5 family. In terms of processing, phosphorylated by CDK, this phosphorylation prevents DNA-binding. Motility is increased when hypophosphorylated. Acetylated.

It is found in the nucleus. The protein localises to the nucleolus. Functionally, binds A/T-rich DNA (e.g. present in the storage gamma-zein gene promoter) with a highly dynamic distribution into the nucleus. Probably involved in endosperm development, during cells shift from a mitotic cycle to endoreduplication leading to massive synthesis of storage proteins (zeins) and starch. This chain is HMG-Y-related protein A, found in Zea mays (Maize).